The chain runs to 171 residues: Large ribosomal subunit protein uL10 (171 aa).

This sequence belongs to the universal ribosomal protein uL10 family. As to quaternary structure, part of the ribosomal stalk of the 50S ribosomal subunit. The N-terminus interacts with L11 and the large rRNA to form the base of the stalk. The C-terminus forms an elongated spine to which L12 dimers bind in a sequential fashion forming a multimeric L10(L12)X complex.

In terms of biological role, forms part of the ribosomal stalk, playing a central role in the interaction of the ribosome with GTP-bound translation factors. This chain is Large ribosomal subunit protein uL10, found in Paracoccus denitrificans (strain Pd 1222).